A 502-amino-acid chain; its full sequence is ATP synthase subunit alpha (502 aa).

The segment at 115 to 135 is disordered; the sequence is VDGLGPINTTNTRPIESPAPG. 169–176 lines the ATP pocket; sequence GDRQTGKT.

This sequence belongs to the ATPase alpha/beta chains family. As to quaternary structure, F-type ATPases have 2 components, CF(1) - the catalytic core - and CF(0) - the membrane proton channel. CF(1) has five subunits: alpha(3), beta(3), gamma(1), delta(1), epsilon(1). CF(0) has three main subunits: a(1), b(2) and c(9-12). The alpha and beta chains form an alternating ring which encloses part of the gamma chain. CF(1) is attached to CF(0) by a central stalk formed by the gamma and epsilon chains, while a peripheral stalk is formed by the delta and b chains.

It is found in the cell membrane. It carries out the reaction ATP + H2O + 4 H(+)(in) = ADP + phosphate + 5 H(+)(out). Its function is as follows. Produces ATP from ADP in the presence of a proton gradient across the membrane. The alpha chain is a regulatory subunit. This chain is ATP synthase subunit alpha, found in Bacillus mycoides (strain KBAB4) (Bacillus weihenstephanensis).